The chain runs to 424 residues: UPF0597 protein Sputw3181_2955 (424 aa).

It belongs to the UPF0597 family.

The sequence is that of UPF0597 protein Sputw3181_2955 from Shewanella sp. (strain W3-18-1).